We begin with the raw amino-acid sequence, 105 residues long: 5-hydroxymethyl-dUMP N-hydrolase (105 aa).

Gly-6, Ile-8, Ser-42, Gly-44, Glu-48, and Ser-72 together coordinate 5-hydroxymethyl-dUMP.

Belongs to the 2'-deoxynucleoside 5'-phosphate N-hydrolase 1 family. In terms of assembly, monomer and homodimer.

It localises to the cytoplasm. The protein resides in the nucleus. It carries out the reaction 5-hydroxymethyl-dUMP + H2O = 5-hydroxymethyluracil + 2-deoxy-D-ribose 5-phosphate. In terms of biological role, part of a nucleotide salvage pathway that eliminates epigenetically modified 5-hydroxymethyl-dCMP (hmdCMP) in a two-step process entailing deamination to cytotoxic 5-hydroxymethyl-dUMP (hmdUMP), followed by its hydrolysis into 5-hydroxymethyluracil (hmU) and 2-deoxy-D-ribose 5-phosphate (deoxyribosephosphate). Catalyzes the second step in that pathway, the hydrolysis of the N-glycosidic bond in hmdUMP, degrading this cytotoxic nucleotide to avoid its genomic integration. The sequence is that of 5-hydroxymethyl-dUMP N-hydrolase from Branchiostoma floridae (Florida lancelet).